The primary structure comprises 522 residues: Sorting nexin-1 (522 aa).

Disordered stretches follow at residues 1-84 (MASG…QDQE) and 115-142 (SLPPQEATNSSKPQPTYEELEEEEQEDQ). Phosphoserine is present on residues Ser32 and Ser39. Residues 35–45 (EAGDSDTEGED) are compositionally biased toward acidic residues. Phosphothreonine occurs at positions 41 and 48. Polar residues predominate over residues 55-73 (KHQSPKITTSLLPINNGSK). Ser58 and Ser72 each carry phosphoserine. Positions 132 to 142 (EELEEEEQEDQ) are enriched in acidic residues. The 130-residue stretch at 143–272 (FDLTVGITDP…EFLEKEELPR (130 aa)) folds into the PX domain. Residues Arg186, Ser188, and Lys214 each contribute to the a 1,2-diacyl-sn-glycero-3-phospho-(1D-myo-inositol-3-phosphate) site. Ser188 carries the post-translational modification Phosphoserine. Residue Lys237 is modified to N6-acetyllysine. Arg238 serves as a coordination point for a 1,2-diacyl-sn-glycero-3-phospho-(1D-myo-inositol-3-phosphate). A Phosphoserine modification is found at Ser280. Residues 281 to 298 (GAGLLKMFNKATDAVSKM) are membrane-binding amphipathic helix. The BAR domain maps to 302-522 (MNESDIWFEE…AFLPEAKAIS (221 aa)).

This sequence belongs to the sorting nexin family. As to quaternary structure, predominantly forms heterodimers with BAR domain-containing sorting nexins SNX5, SNX6 and SNX32; can self-associate to form homodimers. The heterodimers are proposed to self-assemble into helical arrays on the membrane to stabilize and expand local membrane curvature underlying endosomal tubule formation. Thought to be a component of the originally described retromer complex (also called SNX-BAR retromer) which is a pentamer containing the heterotrimeric retromer cargo-selective complex (CSC), also described as vacuolar protein sorting subcomplex (VPS) and a heterodimeric membrane-deforming subcomplex formed between SNX1 or SNX2 and SNX5 or SNX6 (also called SNX-BAR subcomplex); the respective CSC and SNX-BAR subcomplexes associate with low affinity. Interacts with SNX5, SNX6, SNX32, VPS26A, VPS29, VPS35, DRD5, DENND5A, KALRN, RHOG (GDP-bound form). The interaction with SNX2 is reported controversially. Interacts with DNAJC13; prevented by presence of HGS. Interacts with HGS.

It localises to the endosome membrane. Its subcellular location is the golgi apparatus. It is found in the trans-Golgi network membrane. The protein resides in the early endosome membrane. The protein localises to the cell projection. It localises to the lamellipodium. Functionally, involved in several stages of intracellular trafficking. Interacts with membranes containing phosphatidylinositol 3-phosphate (PtdIns(3P)) or phosphatidylinositol 3,5-bisphosphate (PtdIns(3,5)P2). Acts in part as component of the retromer membrane-deforming SNX-BAR subcomplex. The SNX-BAR retromer mediates retrograde transport of cargo proteins from endosomes to the trans-Golgi network (TGN) and is involved in endosome-to-plasma membrane transport for cargo protein recycling. The SNX-BAR subcomplex functions to deform the donor membrane into a tubular profile called endosome-to-TGN transport carrier (ETC). Can sense membrane curvature and has in vitro vesicle-to-membrane remodeling activity. Involved in retrograde endosome-to-TGN transport of lysosomal enzyme receptors (IGF2R, M6PR and SORT1) and Shiginella dysenteria toxin stxB. Plays a role in targeting ligand-activated EGFR to the lysosomes for degradation after endocytosis from the cell surface and release from the Golgi. Involvement in retromer-independent endocytic trafficking of P2RY1 and lysosomal degradation of protease-activated receptor-1/F2R. Promotes KALRN- and RHOG-dependent but retromer-independent membrane remodeling such as lamellipodium formation; the function is dependent on GEF activity of KALRN. Required for endocytosis of DRD5 upon agonist stimulation but not for basal receptor trafficking. The chain is Sorting nexin-1 (SNX1) from Homo sapiens (Human).